A 429-amino-acid polypeptide reads, in one-letter code: Glutamate-1-semialdehyde 2,1-aminomutase 1 (429 aa).

N6-(pyridoxal phosphate)lysine is present on Lys-267.

Belongs to the class-III pyridoxal-phosphate-dependent aminotransferase family. HemL subfamily. Homodimer. Pyridoxal 5'-phosphate serves as cofactor.

The protein localises to the cytoplasm. The catalysed reaction is (S)-4-amino-5-oxopentanoate = 5-aminolevulinate. The protein operates within porphyrin-containing compound metabolism; protoporphyrin-IX biosynthesis; 5-aminolevulinate from L-glutamyl-tRNA(Glu): step 2/2. The protein is Glutamate-1-semialdehyde 2,1-aminomutase 1 of Staphylococcus carnosus (strain TM300).